We begin with the raw amino-acid sequence, 371 residues long: Chaperone protein DnaJ (371 aa).

The J domain maps to Asp-4–Gly-68. Residues Gly-134 to Gln-212 form a CR-type zinc finger. The Zn(2+) site is built by Cys-147, Cys-150, Cys-164, Cys-167, Cys-186, Cys-189, Cys-200, and Cys-203. CXXCXGXG motif repeat units lie at residues Cys-147–Gly-154, Cys-164–Gly-171, Cys-186–Gly-193, and Cys-200–Gly-207.

It belongs to the DnaJ family. Homodimer. Zn(2+) serves as cofactor.

It is found in the cytoplasm. Participates actively in the response to hyperosmotic and heat shock by preventing the aggregation of stress-denatured proteins and by disaggregating proteins, also in an autonomous, DnaK-independent fashion. Unfolded proteins bind initially to DnaJ; upon interaction with the DnaJ-bound protein, DnaK hydrolyzes its bound ATP, resulting in the formation of a stable complex. GrpE releases ADP from DnaK; ATP binding to DnaK triggers the release of the substrate protein, thus completing the reaction cycle. Several rounds of ATP-dependent interactions between DnaJ, DnaK and GrpE are required for fully efficient folding. Also involved, together with DnaK and GrpE, in the DNA replication of plasmids through activation of initiation proteins. The chain is Chaperone protein DnaJ from Rickettsia akari (strain Hartford).